The sequence spans 331 residues: UDP-xylose and UDP-N-acetylglucosamine transporter (331 aa).

A run of 10 helical transmembrane segments spans residues 5 to 25, 30 to 50, 59 to 79, 92 to 112, 122 to 142, 153 to 173, 201 to 221, 238 to 260, 267 to 289, and 301 to 321; these read FAVT…ELLV, GCGN…GFIF, PQIP…VSVI, LHMI…IIIL, LSIV…AKQV, GVYA…ALLM, CLPL…AVLF, VMWF…VFIL, LTVT…LYFQ, and AVVF…PAAF.

It belongs to the nucleotide-sugar transporter family. SLC35B subfamily.

The protein resides in the golgi apparatus membrane. Functionally, sugar transporter that specifically mediates the transport of UDP-xylose (UDP-Xyl) and UDP-N-acetylglucosamine (UDP-GlcNAc) from cytosol into Golgi. This Danio rerio (Zebrafish) protein is UDP-xylose and UDP-N-acetylglucosamine transporter (slc35b4).